A 337-amino-acid polypeptide reads, in one-letter code: Large ribosomal subunit protein uL3 (337 aa).

This sequence belongs to the universal ribosomal protein uL3 family. As to quaternary structure, part of the 50S ribosomal subunit. Forms a cluster with proteins L14 and L24e.

Its function is as follows. One of the primary rRNA binding proteins, it binds directly near the 3'-end of the 23S rRNA, where it nucleates assembly of the 50S subunit. The polypeptide is Large ribosomal subunit protein uL3 (Methanosphaerula palustris (strain ATCC BAA-1556 / DSM 19958 / E1-9c)).